The sequence spans 326 residues: Trans-L-3-hydroxyproline dehydratase (326 aa).

C80 acts as the Proton acceptor in catalysis. Substrate is bound by residues 81-82 (GH), D241, and 246-247 (GS).

Belongs to the proline racemase family. As to quaternary structure, homodimer.

It catalyses the reaction trans-3-hydroxy-L-proline = 1-pyrroline-2-carboxylate + H2O. In terms of biological role, catalyzes the dehydration of trans-3-hydroxy-L-proline to delta-1-pyrroline-2-carboxylate (Pyr2C). This Saccoglossus kowalevskii (Acorn worm) protein is Trans-L-3-hydroxyproline dehydratase (l3hypdh).